Consider the following 380-residue polypeptide: 3-isopropylmalate dehydratase large subunit 2 (380 aa).

Residues Cys262, Cys320, and Cys323 each contribute to the [4Fe-4S] cluster site.

The protein belongs to the aconitase/IPM isomerase family. LeuC type 2 subfamily. As to quaternary structure, heterodimer of LeuC and LeuD. It depends on [4Fe-4S] cluster as a cofactor.

The enzyme catalyses (2R,3S)-3-isopropylmalate = (2S)-2-isopropylmalate. The protein operates within amino-acid biosynthesis; L-leucine biosynthesis; L-leucine from 3-methyl-2-oxobutanoate: step 2/4. In terms of biological role, catalyzes the isomerization between 2-isopropylmalate and 3-isopropylmalate, via the formation of 2-isopropylmaleate. This Pyrococcus furiosus (strain ATCC 43587 / DSM 3638 / JCM 8422 / Vc1) protein is 3-isopropylmalate dehydratase large subunit 2.